Consider the following 98-residue polypeptide: Nuclear protein 2 (98 aa).

A compositionally biased stretch (low complexity) spans 1 to 11 (MEPAAPTVQPR). Disordered stretches follow at residues 1-24 (MEPA…PPVG) and 78-98 (LNSQ…TRLT). Residues 81-98 (QRKRRQRQLQPRPRTRLT) show a composition bias toward basic residues.

The protein belongs to the NUPR family.

The protein localises to the nucleus. Its function is as follows. Acts as a transcriptional repressor by inhibiting gene expression at the NUPR1 promoter in a p53/TP53-dependent manner in cancer cells. Involved in the G1 cell cycle arrest, and in a decrease in cell viability and cell proliferation. Plays a role as a negative regulator of the protumoral factor NUPR1. This is Nuclear protein 2 from Bos taurus (Bovine).